Reading from the N-terminus, the 148-residue chain is Snaclec flavocetin-A subunit beta (148 aa).

A signal peptide spans 1–23 (MGQFIFVSFGFLVVATSLSGTEA). 3 cysteine pairs are disulfide-bonded: cysteine 27/cysteine 38, cysteine 55/cysteine 144, and cysteine 121/cysteine 136. In terms of domain architecture, C-type lectin spans 34-145 (YDEHCYQVFQ…CSSKRYVVCK (112 aa)).

It belongs to the snaclec family. As to quaternary structure, tetramer of heterodimers of alpha and beta subunits (alphabeta)(4); disulfide-linked. Expressed by the venom gland.

The protein localises to the secreted. Its function is as follows. Strong platelet aggregation inhibitor. Binds specifically to platelet glycoprotein Ibalpha (GP1BA) with high affinity and inhibits vWF-dependent platelet aggregation. Has also been observed to induce small agglutinates in washed platelets by binding to GPIb. This chain is Snaclec flavocetin-A subunit beta, found in Protobothrops flavoviridis (Habu).